Consider the following 146-residue polypeptide: Single-stranded DNA-binding protein, mitochondrial (146 aa).

A mitochondrion-targeting transit peptide spans 1-22 (MQHTRRMLNPLLTGLRNLPARG). The region spanning 38 to 142 (VNTVTILGRV…IIADDVLFFR (105 aa)) is the SSB domain.

In terms of assembly, homotetramer. Uniformly distributed in the early embryo. High levels detected in the anterior and posterior midgut primordia of stage 12 embryos. In larvae, high levels were detected in proliferating tissues including the CNS and digestive tract. In adults, highly expressed in the CNS, digestive tract and ovary.

The protein localises to the mitochondrion. Functionally, binds preferentially and cooperatively to pyrimidine rich single-stranded DNA (ss-DNA). Required to maintain the copy number of mitochondrial DNA (mtDNA) and plays crucial roles during mtDNA replication that stimulate activity of the gamma complex polymerase PolG1/tam at the replication fork. Promotes PolG1 activity largely by organizing the template DNA and eliminating secondary structures to favor ss-DNA conformations that facilitate PolG1 activity. The chain is Single-stranded DNA-binding protein, mitochondrial (mtSSB) from Drosophila melanogaster (Fruit fly).